Reading from the N-terminus, the 492-residue chain is GMP reductase (492 aa).

NADP(+)-binding positions include serine 30 to arginine 31 and arginine 78. CBS domains are found at residues leucine 99–threonine 162 and methionine 164–threonine 223. NADP(+) is bound by residues aspartate 260 to alanine 262 and valine 313 to glycine 314. K(+)-binding residues include glycine 314, glycine 316, and cysteine 319. Residue cysteine 319 is the Thioimidate intermediate of the active site. The active-site Proton donor/acceptor is threonine 321. Arginine 322 contributes to the K(+) binding site. GMP is bound by residues aspartate 352–glycine 354, glycine 375–asparagine 376, and glycine 401–alanine 403. Residues methionine 402 and serine 454–serine 457 each bind NADP(+). Positions serine 490–leucine 492 match the Microbody targeting signal motif.

This sequence belongs to the IMPDH/GMPR family. GuaC type 1 subfamily. As to quaternary structure, homotetramer.

The protein resides in the glycosome. It catalyses the reaction IMP + NH4(+) + NADP(+) = GMP + NADPH + 2 H(+). With respect to regulation, activated by GTP and inhibited by XMP and the IMP analogs allopurinol nucleotide and thiopurinol nucleotide. In terms of biological role, catalyzes the irreversible NADPH-dependent deamination of GMP to IMP. It functions in the conversion of nucleobase, nucleoside and nucleotide derivatives of G to A nucleotides, and in maintaining the intracellular balance of A and G nucleotides. This is GMP reductase from Leishmania donovani.